The sequence spans 579 residues: Rhoptry surface protein CERLI2 (579 aa).

The region spanning 52-84 is the C2 domain; that stretch reads LHNYRTFYLLIKINEIFNINKYKQIYIIVNTDK. 11 tandem repeats follow at residues 442-451, 452-461, 462-471, 472-481, 482-491, 492-501, 502-511, 522-531, 532-541, 542-551, and 552-561. The interval 442–561 is 12 X 10 AA tandem repeat of Q-T-E-I-[K/N]-N-D-[H/N/I][I/N]; it reads QTDEIKNDNI…QTDEIKNDIN (120 aa).

The protein resides in the cytoplasmic vesicle. It is found in the secretory vesicle. Its subcellular location is the rhoptry membrane. The protein localises to the cell membrane. It localises to the host cell membrane. Plays an important role in rhoptry physiology and thus is essential for merozoite invasion of host erythrocytes. This is Rhoptry surface protein CERLI2 from Plasmodium falciparum (isolate 3D7).